The following is a 58-amino-acid chain: Cholecystokinins (58 aa).

At Tyr-52 the chain carries Sulfotyrosine. A Phenylalanine amide modification is found at Phe-58.

Belongs to the gastrin/cholecystokinin family. Binds to CCK-A receptors in the pancreas and CCK-B receptors in the brain. cholecystokinin 8 binds CCK-A receptors more potently than cholecystokinin 58, cholecystokinin 8 and cholecystokinin 58 bind CCK-B receptors with equal affinity. The precursor is cleaved by proteases to produce a number of active cholecystokinins. In terms of processing, cholecystokinin 58 occurs in both sulfated (CCK58(s)) and nonsulfated (CCK58(ns)) forms, which differ in their receptor-binding activities. CCK58(s) binds to the CCK-A receptor with high affinity, CCK58(ns) binds poorly to the CCK-A receptor. CCK58(s) and CCK58(ns) both bind the CCK-B receptor. Post-translationally, the precursor is cleaved by ACE, which removes the Gly-Arg-Arg peptide at the C-terminus, leading to mature hormone.

The protein localises to the secreted. This peptide hormone induces gall bladder contraction and the release of pancreatic enzymes in the gut. Its function in the brain is not clear. Binding to CCK-A receptors stimulates amylase release from the pancreas, binding to CCK-B receptors stimulates gastric acid secretion. cholecystokinin 58 and cholecystokinin 8, but not cholecystokinin 58 desnonopeptide, stimulate amylase release from the pancreas. cholecystokinin 58, but not cholecystokinin 8, increases bile-pancreatic volume. The chain is Cholecystokinins from Canis lupus familiaris (Dog).